A 546-amino-acid chain; its full sequence is Putative serine/threonine-protein kinase L268 (546 aa).

The Cyclin N-terminal domain occupies 1–112 (MVCFSKYSGI…ILQTLDFHLV (112 aa)). Residues 260-544 (ITVVKNLGEG…QTLEEFNKFN (285 aa)) form the Protein kinase domain. ATP-binding positions include 266–274 (LGEGTYGTV) and Lys-287. Asp-389 (proton acceptor) is an active-site residue.

Belongs to the protein kinase superfamily. Ser/Thr protein kinase family.

It catalyses the reaction L-seryl-[protein] + ATP = O-phospho-L-seryl-[protein] + ADP + H(+). The enzyme catalyses L-threonyl-[protein] + ATP = O-phospho-L-threonyl-[protein] + ADP + H(+). This is Putative serine/threonine-protein kinase L268 from Acanthamoeba polyphaga mimivirus (APMV).